The primary structure comprises 176 residues: MSKVKKNDETLSEVLVDVNRVTKVVKGGRSFAFSAYVVVGDKAGRVGAGHGKAKEVNEARGKAKQAAKKRMMKVPLYQNRTIHHDVVGKSGAAKVILRRAKAGTGVIAGGSMRAIFDSLGIHDVVAKSIGSTNVYAMISATFDALNKLASPKSIAMRRDKKVNEISVKSADIQVNE.

The region spanning 11-74 (LSEVLVDVNR…QAAKKRMMKV (64 aa)) is the S5 DRBM domain.

This sequence belongs to the universal ribosomal protein uS5 family. In terms of assembly, part of the 30S ribosomal subunit. Contacts proteins S4 and S8.

In terms of biological role, with S4 and S12 plays an important role in translational accuracy. Its function is as follows. Located at the back of the 30S subunit body where it stabilizes the conformation of the head with respect to the body. In Rickettsia rickettsii (strain Iowa), this protein is Small ribosomal subunit protein uS5.